The sequence spans 598 residues: NADH-quinone oxidoreductase subunit C/D (598 aa).

The segment at 1-188 (MTDSTTHDAL…DPFVLTKQKE (188 aa)) is NADH dehydrogenase I subunit C. An NADH dehydrogenase I subunit D region spans residues 212 to 598 (DFMFLNLGPN…IDFVMSDVDR (387 aa)).

It in the N-terminal section; belongs to the complex I 30 kDa subunit family. The protein in the C-terminal section; belongs to the complex I 49 kDa subunit family. As to quaternary structure, NDH-1 is composed of 13 different subunits. Subunits NuoB, CD, E, F, and G constitute the peripheral sector of the complex.

The protein localises to the cell inner membrane. The enzyme catalyses a quinone + NADH + 5 H(+)(in) = a quinol + NAD(+) + 4 H(+)(out). In terms of biological role, NDH-1 shuttles electrons from NADH, via FMN and iron-sulfur (Fe-S) centers, to quinones in the respiratory chain. The immediate electron acceptor for the enzyme in this species is believed to be ubiquinone. Couples the redox reaction to proton translocation (for every two electrons transferred, four hydrogen ions are translocated across the cytoplasmic membrane), and thus conserves the redox energy in a proton gradient. This is NADH-quinone oxidoreductase subunit C/D from Serratia proteamaculans (strain 568).